The primary structure comprises 197 residues: 3-isopropylmalate dehydratase small subunit (197 aa).

The protein belongs to the LeuD family. LeuD type 1 subfamily. As to quaternary structure, heterodimer of LeuC and LeuD.

It carries out the reaction (2R,3S)-3-isopropylmalate = (2S)-2-isopropylmalate. The protein operates within amino-acid biosynthesis; L-leucine biosynthesis; L-leucine from 3-methyl-2-oxobutanoate: step 2/4. Functionally, catalyzes the isomerization between 2-isopropylmalate and 3-isopropylmalate, via the formation of 2-isopropylmaleate. This is 3-isopropylmalate dehydratase small subunit from Mycobacterium sp. (strain JLS).